Reading from the N-terminus, the 887-residue chain is MPILHQKIASTGGQPSTNSLALRRLPLVVIPRKRKYKNYVSRRRNTQLLASLRRCVSDPNVYKSYNHWKALLRPMTPIKSGAPTPKTVTPMPVPQIPPHQKMTPNPTPTQNPVQLPLPHAVSEKPGDKKSTGPTPSPVPSKAPISAAKLPGTVTKVAPLLSAAQPPPKTLAPAPGASETNSGSGPVSKQVSGKLTELKSKNGTVTEKTEKAVLRIPSSASTRAKAASAVAPEANPAPVPTATKPSPFAPAIAPLRDGAPAQPPAPIQASAPLRPPVAKQNSLQKPPEPKRSVGAPPKALPSELVNKIDGIEFLPQSSNQNTDDGQQPTTSTGGAKALRRAYGSKSGTTICAIGSPNVPSTSQPQQGDNEKRLIEKKLSLRKKKLSGEGVPPAGSMLTGSKSGVEIGLSSNLTTTNNNNNKEQTDEQRAKKTVNAVAAAFSTQAGSGNATTVDDPASTTTSKENPAAQPPKPKSAAVQNLISQLQLPASVSAKVDKIIACGDKARKPSRSGLQASQARPKVPEIVSSQRTQHQDDKDGHLIYSKGDFILNRFTIYDTLGEGTFGKVVRVNDSLSDTFMALKIIKNVSKYREAAKLEVKVLQKLAEKDPEKKNWVIHMGSYFDYNGHICLLFDLMGSSIFDFLKANHYKPYPMEQTLHITWQLCNAVKFLHDNKLTHTDLKPENILFVDSRYTTKLVDKKPLRVLHSTHVRLIDFGSATFDHEHHSIIVSTRHYRAPEVILELGWSQPCDVWSIGCILYELYTGVTLFQTHENREHLAMMERVLGDIPLRMAKRTKTKFFINGRLDWVNTSADAAYVRDNCKPLRRSMSCTDPEHVELFELIENMLMFEPLARMKLPEALQHRYFNRLPENLKIPCKMDASTNPRINGD.

Disordered regions lie at residues 77–147 (PIKS…ISAA), 163–299 (AQPP…PKAL), 313–333 (LPQS…STGG), 347–475 (TTIC…KSAA), and 504–533 (RKPS…QHQD). A compositionally biased stretch (low complexity) spans 108 to 118 (PTQNPVQLPLP). Residues 121-130 (VSEKPGDKKS) are compositionally biased toward basic and acidic residues. Residues 177–192 (SETNSGSGPVSKQVSG) are compositionally biased toward polar residues. The segment covering 217-241 (SSASTRAKAASAVAPEANPAPVPTA) has biased composition (low complexity). Polar residues-rich tracts occupy residues 314–332 (PQSS…TSTG) and 356–366 (NVPSTSQPQQG). Residues 367 to 377 (DNEKRLIEKKL) show a composition bias toward basic and acidic residues. The segment covering 407-419 (LSSNLTTTNNNNN) has biased composition (low complexity). Residues 439–462 (FSTQAGSGNATTVDDPASTTTSKE) show a composition bias toward polar residues. Residues 551-863 (FTIYDTLGEG…LPEALQHRYF (313 aa)) form the Protein kinase domain. ATP-binding positions include 557–565 (LGEGTFGKV) and Lys580. The Proton acceptor role is filled by Asp677.

The protein belongs to the protein kinase superfamily. CMGC Ser/Thr protein kinase family. Lammer subfamily. As to expression, expressed in body wall, vulval and anal depressor muscles.

Its subcellular location is the cytoplasm. The protein localises to the nucleus. Probable dual specificity kinase acting on both serine/threonine and tyrosine-containing substrates. Negatively regulates p38 MAPK signaling to allow for the plasma membrane of body wall muscle cells to form projections, also called muscle arms, that extend and connect the body wall muscles to target motor neurons. Negative regulation of p38 MAPK signaling may in turn modulate the trafficking of the muscle specific receptor eva-1 to the lysosome, to ensure proper display of the eva-1 receptor on the plasma membrane of muscle cells and allow for muscle arm extension towards guidance cues. The sequence is that of Probable dual specificity protein kinase madd-3 from Caenorhabditis elegans.